We begin with the raw amino-acid sequence, 232 residues long: MRLKIGIIGAMAQEVEILRNLMVEAKVIEIAGCKIYDGKINNTQVALLQSGIGKVAAAVGTALLLELTKPDVIINTGSAGGLDANLNVGDIVISTEVRHHDADVTAFGYEKGQLPANPAAFLPNEQLVSVALKETQTAGFNAVSGLICSGDVFVNGAEKIAQIRQDFPNVAAVEMEAAAIAQVCHAFNVPFVVVRAISDVADKESHLSFDEFLPLAAKNSSEIVVAMLNNFA.

Glu14 serves as the catalytic Proton acceptor. Residues Gly80, Val154, and 175 to 176 (ME) contribute to the substrate site. Asp199 (proton donor) is an active-site residue.

It belongs to the PNP/UDP phosphorylase family. MtnN subfamily.

It carries out the reaction S-adenosyl-L-homocysteine + H2O = S-(5-deoxy-D-ribos-5-yl)-L-homocysteine + adenine. The enzyme catalyses S-methyl-5'-thioadenosine + H2O = 5-(methylsulfanyl)-D-ribose + adenine. It catalyses the reaction 5'-deoxyadenosine + H2O = 5-deoxy-D-ribose + adenine. The protein operates within amino-acid biosynthesis; L-methionine biosynthesis via salvage pathway; S-methyl-5-thio-alpha-D-ribose 1-phosphate from S-methyl-5'-thioadenosine (hydrolase route): step 1/2. Catalyzes the irreversible cleavage of the glycosidic bond in both 5'-methylthioadenosine (MTA) and S-adenosylhomocysteine (SAH/AdoHcy) to adenine and the corresponding thioribose, 5'-methylthioribose and S-ribosylhomocysteine, respectively. Also cleaves 5'-deoxyadenosine, a toxic by-product of radical S-adenosylmethionine (SAM) enzymes, into 5-deoxyribose and adenine. The chain is 5'-methylthioadenosine/S-adenosylhomocysteine nucleosidase from Actinobacillus pleuropneumoniae serotype 5b (strain L20).